The sequence spans 128 residues: Large ribosomal subunit protein uL22 (128 aa).

Belongs to the universal ribosomal protein uL22 family. Part of the 50S ribosomal subunit.

In terms of biological role, this protein binds specifically to 23S rRNA; its binding is stimulated by other ribosomal proteins, e.g. L4, L17, and L20. It is important during the early stages of 50S assembly. It makes multiple contacts with different domains of the 23S rRNA in the assembled 50S subunit and ribosome. Its function is as follows. The globular domain of the protein is located near the polypeptide exit tunnel on the outside of the subunit, while an extended beta-hairpin is found that lines the wall of the exit tunnel in the center of the 70S ribosome. The chain is Large ribosomal subunit protein uL22 from Rhodopseudomonas palustris (strain BisA53).